A 691-amino-acid chain; its full sequence is DNA ligase (691 aa).

NAD(+) contacts are provided by residues 41 to 45 (DAEYD), 90 to 91 (SL), and Glu130. The active-site N6-AMP-lysine intermediate is Lys132. NAD(+)-binding residues include Arg153, Glu190, Lys307, and Lys331. The Zn(2+) site is built by Cys425, Cys428, Cys443, and Cys449. The BRCT domain occupies 610–691 (APQGVLAGKT…LHQLLEGNTP (82 aa)).

It belongs to the NAD-dependent DNA ligase family. LigA subfamily. Requires Mg(2+) as cofactor. Mn(2+) serves as cofactor.

The catalysed reaction is NAD(+) + (deoxyribonucleotide)n-3'-hydroxyl + 5'-phospho-(deoxyribonucleotide)m = (deoxyribonucleotide)n+m + AMP + beta-nicotinamide D-nucleotide.. Functionally, DNA ligase that catalyzes the formation of phosphodiester linkages between 5'-phosphoryl and 3'-hydroxyl groups in double-stranded DNA using NAD as a coenzyme and as the energy source for the reaction. It is essential for DNA replication and repair of damaged DNA. The sequence is that of DNA ligase from Burkholderia ambifaria (strain ATCC BAA-244 / DSM 16087 / CCUG 44356 / LMG 19182 / AMMD) (Burkholderia cepacia (strain AMMD)).